The chain runs to 493 residues: MHLPSLSVALALVSSSLALPQAVLPENDVSSRAAAVKEAFSHAWDGYMKYAFPHDELLPVSNSYGDSRNGWGASAVDALSTAIVMRNATIVSQILDHIAKIDYSKTSDMVSLFETTIRYLGGMLSGYDLLKGPAADLVEDRTKVDMLLQQSKNLGDVLKFAFDTPSGVPYNNINITSHGNDGATTNGLAVTGTLVLEWTRLSDLTGDQEYAKLSQRAESYLLAPQPSSGEPFPGLVGSAISIQTGQFTNGFVSWNGGSDSFYEYLMKMYVYDPKRFATYKDRWVAAAESSIDHLASNPASRPDLTFLATYNKGSLGLSSQHLACFDGGSYLLGGTVLDRADLIDFGLKLVDGCAETYHQTLTGIGPESFGWDEKSVPADQKELYERAGFYVQSGAYILRPEVIESFYYAYRVTGKKQYRDWVWNAFENINKYCRTESGFAGLTNVNAVNGGGRYDNQESFLFAEVMKYAYLTHAPGMSSMPAAAEDKANKSRG.

The first 18 residues, 1–18, serve as a signal peptide directing secretion; that stretch reads MHLPSLSVALALVSSSLA. N87 and N174 each carry an N-linked (GlcNAc...) asparagine glycan. C324 and C353 are joined by a disulfide. E367 acts as the Proton donor in catalysis. N489 is a glycosylation site (N-linked (GlcNAc...) asparagine).

Belongs to the glycosyl hydrolase 47 family. Monomer. Ca(2+) is required as a cofactor. It depends on Mg(2+) as a cofactor.

It localises to the cytoplasmic vesicle lumen. The catalysed reaction is N(4)-(alpha-D-Man-(1-&gt;2)-alpha-D-Man-(1-&gt;2)-alpha-D-Man-(1-&gt;3)-[alpha-D-Man-(1-&gt;2)-alpha-D-Man-(1-&gt;3)-[alpha-D-Man-(1-&gt;2)-alpha-D-Man-(1-&gt;6)]-alpha-D-Man-(1-&gt;6)]-beta-D-Man-(1-&gt;4)-beta-D-GlcNAc-(1-&gt;4)-beta-D-GlcNAc)-L-asparaginyl-[protein] (N-glucan mannose isomer 9A1,2,3B1,2,3) + 4 H2O = N(4)-(alpha-D-Man-(1-&gt;3)-[alpha-D-Man-(1-&gt;3)-[alpha-D-Man-(1-&gt;6)]-alpha-D-Man-(1-&gt;6)]-beta-D-Man-(1-&gt;4)-beta-D-GlcNAc-(1-&gt;4)-beta-D-GlcNAc)-L-asparaginyl-[protein] (N-glucan mannose isomer 5A1,2) + 4 beta-D-mannose. It carries out the reaction N(4)-(alpha-D-Man-(1-&gt;2)-alpha-D-Man-(1-&gt;2)-alpha-D-Man-(1-&gt;3)-[alpha-D-Man-(1-&gt;3)-[alpha-D-Man-(1-&gt;2)-alpha-D-Man-(1-&gt;6)]-alpha-D-Man-(1-&gt;6)]-beta-D-Man-(1-&gt;4)-beta-D-GlcNAc-(1-&gt;4)-beta-D-GlcNAc)-L-asparaginyl-[protein] (N-glucan mannose isomer 8A1,2,3B1,3) + 3 H2O = N(4)-(alpha-D-Man-(1-&gt;3)-[alpha-D-Man-(1-&gt;3)-[alpha-D-Man-(1-&gt;6)]-alpha-D-Man-(1-&gt;6)]-beta-D-Man-(1-&gt;4)-beta-D-GlcNAc-(1-&gt;4)-beta-D-GlcNAc)-L-asparaginyl-[protein] (N-glucan mannose isomer 5A1,2) + 3 beta-D-mannose. Its pathway is protein modification; protein glycosylation. Its function is as follows. Involved in the maturation of Asn-linked oligosaccharides. Progressively trims alpha-1,2-linked mannose residues from Man(9)GlcNAc(2) to produce Man(5)GlcNAc(2). In Aspergillus fumigatus (strain CBS 144.89 / FGSC A1163 / CEA10) (Neosartorya fumigata), this protein is Probable mannosyl-oligosaccharide alpha-1,2-mannosidase 1B (mns1B).